A 601-amino-acid chain; its full sequence is Proline--tRNA ligase (601 aa).

The protein belongs to the class-II aminoacyl-tRNA synthetase family. ProS type 1 subfamily. Homodimer.

It localises to the cytoplasm. It catalyses the reaction tRNA(Pro) + L-proline + ATP = L-prolyl-tRNA(Pro) + AMP + diphosphate. Its function is as follows. Catalyzes the attachment of proline to tRNA(Pro) in a two-step reaction: proline is first activated by ATP to form Pro-AMP and then transferred to the acceptor end of tRNA(Pro). As ProRS can inadvertently accommodate and process non-cognate amino acids such as alanine and cysteine, to avoid such errors it has two additional distinct editing activities against alanine. One activity is designated as 'pretransfer' editing and involves the tRNA(Pro)-independent hydrolysis of activated Ala-AMP. The other activity is designated 'posttransfer' editing and involves deacylation of mischarged Ala-tRNA(Pro). The misacylated Cys-tRNA(Pro) is not edited by ProRS. The polypeptide is Proline--tRNA ligase (Trichodesmium erythraeum (strain IMS101)).